The sequence spans 346 residues: Ferredoxin--NADP reductase 1 (346 aa).

FAD-binding residues include E37, K45, Y49, I89, P124, D287, and S328.

This sequence belongs to the ferredoxin--NADP reductase type 2 family. As to quaternary structure, homodimer. The cofactor is FAD.

The catalysed reaction is 2 reduced [2Fe-2S]-[ferredoxin] + NADP(+) + H(+) = 2 oxidized [2Fe-2S]-[ferredoxin] + NADPH. In Bacillus pumilus (strain SAFR-032), this protein is Ferredoxin--NADP reductase 1.